Reading from the N-terminus, the 285-residue chain is Sulfotransferase 2A1 (285 aa).

6 residues coordinate 3'-phosphoadenylyl sulfate: lysine 44, serine 45, glycine 46, threonine 47, asparagine 48, and tryptophan 49. The active-site Proton acceptor is histidine 99. 3'-phosphoadenylyl sulfate is bound by residues arginine 121, serine 129, tyrosine 184, serine 218, methionine 223, arginine 247, lysine 248, and glycine 249. Serine 251 bears the Phosphoserine mark.

The protein belongs to the sulfotransferase 1 family. As to quaternary structure, homodimer. As to expression, predominanly expressed in liver. Detected also in adrenal gland and in jejunum.

The protein resides in the cytoplasm. It localises to the cytosol. It catalyses the reaction an alcohol + 3'-phosphoadenylyl sulfate = an alkyl sulfate + adenosine 3',5'-bisphosphate + H(+). The catalysed reaction is 3beta-hydroxyandrost-5-en-17-one + 3'-phosphoadenylyl sulfate = dehydroepiandrosterone 3-sulfate + adenosine 3',5'-bisphosphate + H(+). It carries out the reaction taurolithocholate + 3'-phosphoadenylyl sulfate = taurolithocholate 3-sulfate + adenosine 3',5'-bisphosphate + H(+). The enzyme catalyses lithocholate + 3'-phosphoadenylyl sulfate = lithocholate sulfate + adenosine 3',5'-bisphosphate + H(+). It catalyses the reaction (24S)-hydroxycholesterol + 3'-phosphoadenylyl sulfate = (24S)-hydroxycholesterol 24-sulfate + adenosine 3',5'-bisphosphate + H(+). The catalysed reaction is (24S)-hydroxycholesterol + 3'-phosphoadenylyl sulfate = (24S)-hydroxycholesterol 3-sulfate + adenosine 3',5'-bisphosphate + H(+). It carries out the reaction (24S)-hydroxycholesterol 24-sulfate + 3'-phosphoadenylyl sulfate = (24S)-hydroxycholesterol 3,24-disulfate + adenosine 3',5'-bisphosphate + H(+). The enzyme catalyses pregnenolone + 3'-phosphoadenylyl sulfate = pregnenolone sulfate + adenosine 3',5'-bisphosphate + H(+). It catalyses the reaction androsterone + 3'-phosphoadenylyl sulfate = androsterone 3alpha-sulfate + adenosine 3',5'-bisphosphate + H(+). In terms of biological role, sulfotransferase that utilizes 3'-phospho-5'-adenylyl sulfate (PAPS) as sulfonate donor to catalyze the sulfonation of steroids and bile acids in the liver and adrenal glands. Mediates the sulfation of a wide range of steroids and sterols, including pregnenolone, androsterone, DHEA, bile acids, cholesterol and as well many xenobiotics that contain alcohol and phenol functional groups. Sulfonation increases the water solubility of most compounds, and therefore their renal excretion, but it can also result in bioactivation to form active metabolites. Plays an important role in maintening steroid and lipid homeostasis. Plays a key role in bile acid metabolism. In addition, catalyzes the metabolic activation of potent carcinogenic polycyclic arylmethanols. This Macaca fascicularis (Crab-eating macaque) protein is Sulfotransferase 2A1 (SULT2A1).